Consider the following 125-residue polypeptide: Small ribosomal subunit protein eS8 (125 aa).

Basic residues predominate over residues 1 to 23; that stretch reads MQFQGRSRRKYTGAKLKSARGKR. A disordered region spans residues 1–34; sequence MQFQGRSRRKYTGAKLKSARGKRKFELGREPAAT.

It belongs to the eukaryotic ribosomal protein eS8 family. As to quaternary structure, part of the 30S ribosomal subunit.

In Methanococcoides burtonii (strain DSM 6242 / NBRC 107633 / OCM 468 / ACE-M), this protein is Small ribosomal subunit protein eS8.